A 156-amino-acid polypeptide reads, in one-letter code: Movement protein P17 (156 aa).

Residues 38–54 form a homodimerization region; that stretch reads AEDVEEEAIAAQEELEF. The segment at 57-156 is RNA-binding; the sequence is DEAQARHSCL…RAAPKLIKRG (100 aa). A phosphoserine mark is found at Ser71, Ser79, Ser137, and Ser140. The interval 106 to 156 is disordered; it reads ASYFSSSARPLPPPPAPSLMSWTPIAKYHPSSPTSTSSKLRRAAPKLIKRG. Residues 144-156 show a composition bias toward basic residues; that stretch reads KLRRAAPKLIKRG.

Belongs to the polerovirus movement protein family. In terms of assembly, homodimer. In terms of processing, expressed as a nonphosphorylated 20kDa form and a phosphorylated 22kDa form. Phosphorylated by a host PKC-related kinase. Serine phosphorylation is required for plamodesma targeting.

It localises to the host cell junction. The protein localises to the host plasmodesma. It is found in the host chloroplast envelope. The protein resides in the host Golgi apparatus. Its subcellular location is the host mitochondrion outer membrane. Its function is as follows. Together with movement protein P3a, facilitates long-distance movement of virions in host. Transports viral genome to neighboring plant cells directly through plasmosdesmata, without any budding. The movement protein allows efficient cell to cell propagation, by bypassing the host cell wall barrier. Binds ssRNA. The chain is Movement protein P17 from Solanum tuberosum (Potato).